Here is a 644-residue protein sequence, read N- to C-terminus: Threonine--tRNA ligase (644 aa).

The TGS domain maps to 1–61 (MVAITLPDGS…AHDAKVEIVT (61 aa)). A catalytic region spans residues 242-533 (DHRKIGKALN…LIENYAGWMP (292 aa)). The Zn(2+) site is built by cysteine 333, histidine 384, and histidine 510.

This sequence belongs to the class-II aminoacyl-tRNA synthetase family. In terms of assembly, homodimer. It depends on Zn(2+) as a cofactor.

The protein resides in the cytoplasm. It catalyses the reaction tRNA(Thr) + L-threonine + ATP = L-threonyl-tRNA(Thr) + AMP + diphosphate + H(+). Its function is as follows. Catalyzes the attachment of threonine to tRNA(Thr) in a two-step reaction: L-threonine is first activated by ATP to form Thr-AMP and then transferred to the acceptor end of tRNA(Thr). Also edits incorrectly charged L-seryl-tRNA(Thr). The protein is Threonine--tRNA ligase of Psychrobacter cryohalolentis (strain ATCC BAA-1226 / DSM 17306 / VKM B-2378 / K5).